A 2327-amino-acid polypeptide reads, in one-letter code: Pre-mRNA-processing-splicing factor 8 homolog (2327 aa).

Over residues 1-14 the composition is skewed to polar residues; sequence MDDTNSNINQSNES. The interval 1–20 is disordered; that stretch reads MDDTNSNINQSNESQHLEEK. The interval 801-1292 is reverse transcriptase homology domain; the sequence is TTVHWLEKRR…KIQTRVKIGL (492 aa). The linker stretch occupies residues 1293 to 1566; it reads NSKMPNRFPP…TLKISLIQIF (274 aa). Residues 1502-1515 form an important for branch point selection region; sequence MKYKKLTHAQRSGL. Residues 1570–1740 form a restriction endonuclease homology domain region; the sequence is LWQKIHESLV…LRERIRKGLQ (171 aa). An involved in interaction with pre-mRNA 5' splice site region spans residues 1657–2023; it reads GDFDSHDIER…QIAEIEKQKT (367 aa). The tract at residues 1755–2008 is RNase H homology domain; that stretch reads NFGELFSNKI…ILGMEISAPS (254 aa). In terms of domain architecture, MPN spans 2093 to 2223; the sequence is TYVFPKNILK…LTAYHLTPSG (131 aa).

Part of the U5 snRNP complex and of the U4/U6-U5 tri-snRNP complex.

The protein localises to the nucleus speckle. Functions as a scaffold that mediates the ordered assembly of spliceosomal proteins and snRNAs. Required for the assembly of the U4/U6-U5 tri-snRNP complex. Functions as a scaffold that positions spliceosomal U2, U5 and U6 snRNAs at splice sites on pre-mRNA substrates, so that splicing can occur. Interacts with both the 5' and the 3' splice site. This chain is Pre-mRNA-processing-splicing factor 8 homolog (prpf8), found in Dictyostelium discoideum (Social amoeba).